Reading from the N-terminus, the 325-residue chain is Cell division protein ZipA (325 aa).

Over 1–5 (MQELR) the chain is Periplasmic. Residues 6 to 26 (LVLILVGALAIAALLFHGLWT) traverse the membrane as a helical segment. At 27–325 (SRKETSSKFG…KQRVKVFCRK (299 aa)) the chain is on the cytoplasmic side.

The protein belongs to the ZipA family. As to quaternary structure, interacts with FtsZ via their C-terminal domains.

It is found in the cell inner membrane. Essential cell division protein that stabilizes the FtsZ protofilaments by cross-linking them and that serves as a cytoplasmic membrane anchor for the Z ring. Also required for the recruitment to the septal ring of downstream cell division proteins. The chain is Cell division protein ZipA from Aliivibrio fischeri (strain MJ11) (Vibrio fischeri).